The following is a 150-amino-acid chain: Cytochrome c oxidase subunit 5A, mitochondrial (150 aa).

A mitochondrion-targeting transit peptide spans 1-41 (MLGAALRRCAVAATTRAGPRGLLHSARTPGPAAAIQSVRCY). The short motif at 2–17 (LGAALRRCAVAATTRA) is the SIFI-degron element. Residues K87 and K113 each carry the N6-acetyllysine modification. T141 is modified (phosphothreonine).

It belongs to the cytochrome c oxidase subunit 5A family. As to quaternary structure, component of the cytochrome c oxidase (complex IV, CIV), a multisubunit enzyme composed of 14 subunits. The complex is composed of a catalytic core of 3 subunits MT-CO1, MT-CO2 and MT-CO3, encoded in the mitochondrial DNA, and 11 supernumerary subunits COX4I, COX5A, COX5B, COX6A, COX6B, COX6C, COX7A, COX7B, COX7C, COX8 and NDUFA4, which are encoded in the nuclear genome. The complex exists as a monomer or a dimer and forms supercomplexes (SCs) in the inner mitochondrial membrane with NADH-ubiquinone oxidoreductase (complex I, CI) and ubiquinol-cytochrome c oxidoreductase (cytochrome b-c1 complex, complex III, CIII), resulting in different assemblies (supercomplex SCI(1)III(2)IV(1) and megacomplex MCI(2)III(2)IV(2)). Interacts with AFG1L. Interacts with RAB5IF. Post-translationally, in response to mitochondrial stress, the precursor protein is ubiquitinated by the SIFI complex in the cytoplasm before mitochondrial import, leading to its degradation. Within the SIFI complex, UBR4 initiates ubiquitin chain that are further elongated or branched by KCMF1.

It localises to the mitochondrion inner membrane. It functions in the pathway energy metabolism; oxidative phosphorylation. In terms of biological role, component of the cytochrome c oxidase, the last enzyme in the mitochondrial electron transport chain which drives oxidative phosphorylation. The respiratory chain contains 3 multisubunit complexes succinate dehydrogenase (complex II, CII), ubiquinol-cytochrome c oxidoreductase (cytochrome b-c1 complex, complex III, CIII) and cytochrome c oxidase (complex IV, CIV), that cooperate to transfer electrons derived from NADH and succinate to molecular oxygen, creating an electrochemical gradient over the inner membrane that drives transmembrane transport and the ATP synthase. Cytochrome c oxidase is the component of the respiratory chain that catalyzes the reduction of oxygen to water. Electrons originating from reduced cytochrome c in the intermembrane space (IMS) are transferred via the dinuclear copper A center (CU(A)) of subunit 2 and heme A of subunit 1 to the active site in subunit 1, a binuclear center (BNC) formed by heme A3 and copper B (CU(B)). The BNC reduces molecular oxygen to 2 water molecules using 4 electrons from cytochrome c in the IMS and 4 protons from the mitochondrial matrix. This is Cytochrome c oxidase subunit 5A, mitochondrial (COX5A) from Gorilla gorilla gorilla (Western lowland gorilla).